Consider the following 263-residue polypeptide: LOB domain-containing protein 41 (263 aa).

The LOB domain occupies 3–109 (MSCNGCRVLR…VEAVMKGEPV (107 aa)). Residues 162–204 (TVAIQAESEGKSDEASHDSSLSHQSEIVAAHEGESKESESNVS) are disordered. Basic and acidic residues-rich tracts occupy residues 169-178 (SEGKSDEASH) and 190-200 (AAHEGESKESE).

The protein belongs to the LOB domain-containing protein family. As to expression, expressed in young shoots, roots, stems, leaves and flowers.

This is LOB domain-containing protein 41 (LBD41) from Arabidopsis thaliana (Mouse-ear cress).